The following is a 1043-amino-acid chain: Beta-klotho (1043 aa).

Residues 1 to 994 (MKTGCAAGSP…ICSFLVEKKP (994 aa)) lie on the Extracellular side of the membrane. Glycosyl hydrolase-1 stretches follow at residues 77–506 (LYDT…DNGF) and 515–965 (MKGR…SSGL). Residues Asn-84, Asn-122, Asn-161, Asn-211, Asn-262, Asn-308, Asn-389, Asn-552, Asn-609, Asn-700, Asn-704, and Asn-837 are each glycosylated (N-linked (GlcNAc...) asparagine). Residues 995 to 1015 (LIFFGCCFISTLAVLLSITVF) traverse the membrane as a helical segment. Residues 1016 to 1043 (HHQKRRKFQKARNLQNIPLKKGHSRVFS) are Cytoplasmic-facing.

Belongs to the glycosyl hydrolase 1 family. Klotho subfamily. Interacts with FGF19; this interaction is direct. Interacts (via C-terminus) with FGF21; this interaction is direct. Interacts with FGFR1 and FGFR4. Present in liver, muscle and white adipose tissue, but not in kidney (at protein level). Expressed in liver and pancreas, and at lower levels in skin, stomach, skeletal muscle, small intestine and lung.

It is found in the cell membrane. Contributes to the transcriptional repression of cholesterol 7-alpha-hydroxylase (CYP7A1), the rate-limiting enzyme in bile acid synthesis. Probably inactive as a glycosidase. Increases the ability of FGFR1 and FGFR4 to bind FGF21. In Mus musculus (Mouse), this protein is Beta-klotho (Klb).